A 63-amino-acid polypeptide reads, in one-letter code: DNA gyrase inhibitor YacG (63 aa).

Zn(2+)-binding residues include cysteine 9, cysteine 12, cysteine 28, and cysteine 32.

This sequence belongs to the DNA gyrase inhibitor YacG family. As to quaternary structure, interacts with GyrB. It depends on Zn(2+) as a cofactor.

Functionally, inhibits all the catalytic activities of DNA gyrase by preventing its interaction with DNA. Acts by binding directly to the C-terminal domain of GyrB, which probably disrupts DNA binding by the gyrase. In Salmonella paratyphi A (strain AKU_12601), this protein is DNA gyrase inhibitor YacG.